The primary structure comprises 189 residues: Putative L,D-transpeptidase in ATP synthase subunits region ORF 5 (189 aa).

Positions 1 to 35 (MTDTLNRRAAMALGLASAAGAALATPALSQDAAPA) form a signal peptide, tat-type signal. Residues 59-189 (PMLVADTFSR…CPVGTRVRVI (131 aa)) enclose the L,D-TPase catalytic domain. The active-site Proton donor/acceptor is H149. C165 functions as the Nucleophile in the catalytic mechanism.

It belongs to the YkuD family. Predicted to be exported by the Tat system. The position of the signal peptide cleavage has not been experimentally proven.

The protein operates within cell wall biogenesis; peptidoglycan biosynthesis. The sequence is that of Putative L,D-transpeptidase in ATP synthase subunits region ORF 5 from Fuscovulum blasticum (Rhodobacter blasticus).